Reading from the N-terminus, the 296-residue chain is Malate--CoA ligase subunit alpha (296 aa).

Residues Thr17–Lys20, Lys43, and Ile96–Asp98 each bind CoA. His251 functions as the Tele-phosphohistidine intermediate in the catalytic mechanism.

The protein belongs to the succinate/malate CoA ligase alpha subunit family. As to quaternary structure, heterotetramer of two alpha and two beta subunits.

The enzyme catalyses (S)-malate + ATP + CoA = (S)-malyl-CoA + ADP + phosphate. It participates in one-carbon metabolism; formaldehyde assimilation via serine pathway. The protein is Malate--CoA ligase subunit alpha (mtkB) of Methylorubrum extorquens (strain ATCC 14718 / DSM 1338 / JCM 2805 / NCIMB 9133 / AM1) (Methylobacterium extorquens).